The chain runs to 807 residues: Ribosomal RNA large subunit methyltransferase K/L (807 aa).

Residues 67–182 form the THUMP domain; the sequence is QIYKICLWSR…EKQAEIFLDL (116 aa). The span at 548–560 shows a compositional bias: polar residues; it reads NTQYGNPEASAQS. Residues 548 to 602 are disordered; sequence NTQYGNPEASAQSKESKNAPEPKKDNRNRYKGNKFQQAREEAKRQEAQRLAQKKR. Composition is skewed to basic and acidic residues over residues 561-575 and 584-594; these read KESKNAPEPKKDNRN and QAREEAKRQEA.

The protein belongs to the methyltransferase superfamily. RlmKL family.

The protein localises to the cytoplasm. It carries out the reaction guanosine(2445) in 23S rRNA + S-adenosyl-L-methionine = N(2)-methylguanosine(2445) in 23S rRNA + S-adenosyl-L-homocysteine + H(+). The enzyme catalyses guanosine(2069) in 23S rRNA + S-adenosyl-L-methionine = N(2)-methylguanosine(2069) in 23S rRNA + S-adenosyl-L-homocysteine + H(+). Functionally, specifically methylates the guanine in position 2445 (m2G2445) and the guanine in position 2069 (m7G2069) of 23S rRNA. The polypeptide is Ribosomal RNA large subunit methyltransferase K/L (Psychrobacter sp. (strain PRwf-1)).